We begin with the raw amino-acid sequence, 385 residues long: 1-deoxy-D-xylulose 5-phosphate reductoisomerase (385 aa).

Residues Thr10, Gly11, Ser12, Ile13, and Asn124 each coordinate NADPH. Lys125 is a binding site for 1-deoxy-D-xylulose 5-phosphate. Glu126 lines the NADPH pocket. A Mn(2+)-binding site is contributed by Asp150. Residues Ser151, Glu152, Ser176, and His199 each coordinate 1-deoxy-D-xylulose 5-phosphate. Glu152 is a binding site for Mn(2+). Gly205 contributes to the NADPH binding site. 4 residues coordinate 1-deoxy-D-xylulose 5-phosphate: Ser212, Asn217, Lys218, and Glu221. Glu221 is a binding site for Mn(2+).

Belongs to the DXR family. Mg(2+) serves as cofactor. Mn(2+) is required as a cofactor.

The enzyme catalyses 2-C-methyl-D-erythritol 4-phosphate + NADP(+) = 1-deoxy-D-xylulose 5-phosphate + NADPH + H(+). It functions in the pathway isoprenoid biosynthesis; isopentenyl diphosphate biosynthesis via DXP pathway; isopentenyl diphosphate from 1-deoxy-D-xylulose 5-phosphate: step 1/6. Its function is as follows. Catalyzes the NADPH-dependent rearrangement and reduction of 1-deoxy-D-xylulose-5-phosphate (DXP) to 2-C-methyl-D-erythritol 4-phosphate (MEP). The polypeptide is 1-deoxy-D-xylulose 5-phosphate reductoisomerase (Clostridium kluyveri (strain NBRC 12016)).